The chain runs to 104 residues: DNA-directed RNA polymerase subunit omega (104 aa).

Belongs to the RNA polymerase subunit omega family. In terms of assembly, the RNAP catalytic core consists of 2 alpha, 1 beta, 1 beta' and 1 omega subunit. When a sigma factor is associated with the core the holoenzyme is formed, which can initiate transcription.

It catalyses the reaction RNA(n) + a ribonucleoside 5'-triphosphate = RNA(n+1) + diphosphate. Promotes RNA polymerase assembly. Latches the N- and C-terminal regions of the beta' subunit thereby facilitating its interaction with the beta and alpha subunits. This is DNA-directed RNA polymerase subunit omega from Streptococcus agalactiae serotype Ia (strain ATCC 27591 / A909 / CDC SS700).